A 247-amino-acid polypeptide reads, in one-letter code: ATP synthase subunit a (247 aa).

The next 6 helical transmembrane spans lie at Ile-23 to Leu-43, Leu-90 to Phe-110, Val-116 to Ala-136, Met-145 to Ile-165, Gly-194 to Leu-214, and Ser-215 to Leu-235.

The protein belongs to the ATPase A chain family. As to quaternary structure, F-type ATPases have 2 components, CF(1) - the catalytic core - and CF(0) - the membrane proton channel. CF(1) has five subunits: alpha(3), beta(3), gamma(1), delta(1), epsilon(1). CF(0) has three main subunits: a(1), b(2) and c(9-12). The alpha and beta chains form an alternating ring which encloses part of the gamma chain. CF(1) is attached to CF(0) by a central stalk formed by the gamma and epsilon chains, while a peripheral stalk is formed by the delta and b chains.

It is found in the cell inner membrane. Key component of the proton channel; it plays a direct role in the translocation of protons across the membrane. This Paramagnetospirillum magneticum (strain ATCC 700264 / AMB-1) (Magnetospirillum magneticum) protein is ATP synthase subunit a.